Reading from the N-terminus, the 997-residue chain is Protein translocase subunit SecA (997 aa).

ATP-binding positions include glutamine 84, 102–106 (GEGKT), and aspartate 582. The tract at residues 950–997 (PYVPVPEAKPEPSEVFGVERKRATPPPQPGLSRAERRRLMRQEKKRKK) is disordered. Positions 957 to 971 (AKPEPSEVFGVERKR) are enriched in basic and acidic residues. Residues 984–997 (ERRRLMRQEKKRKK) are compositionally biased toward basic residues.

Belongs to the SecA family. In terms of assembly, monomer and homodimer. Part of the essential Sec protein translocation apparatus which comprises SecA, SecYEG and auxiliary proteins SecDF. Other proteins may also be involved.

The protein resides in the cell inner membrane. Its subcellular location is the cytoplasm. It carries out the reaction ATP + H2O + cellular proteinSide 1 = ADP + phosphate + cellular proteinSide 2.. Its function is as follows. Part of the Sec protein translocase complex. Interacts with the SecYEG preprotein conducting channel. Has a central role in coupling the hydrolysis of ATP to the transfer of proteins into and across the cell membrane, serving as an ATP-driven molecular motor driving the stepwise translocation of polypeptide chains across the membrane. The sequence is that of Protein translocase subunit SecA from Thermus thermophilus (strain ATCC BAA-163 / DSM 7039 / HB27).